Reading from the N-terminus, the 98-residue chain is Co-chaperonin GroES (98 aa).

Belongs to the GroES chaperonin family. As to quaternary structure, heptamer of 7 subunits arranged in a ring. Interacts with the chaperonin GroEL.

It is found in the cytoplasm. In terms of biological role, together with the chaperonin GroEL, plays an essential role in assisting protein folding. The GroEL-GroES system forms a nano-cage that allows encapsulation of the non-native substrate proteins and provides a physical environment optimized to promote and accelerate protein folding. GroES binds to the apical surface of the GroEL ring, thereby capping the opening of the GroEL channel. The protein is Co-chaperonin GroES of Rhizobium leguminosarum bv. trifolii (strain WSM2304).